The primary structure comprises 98 residues: Homeobox protein Ht-En (98 aa).

A DNA-binding region (homeobox) is located at residues 3–62 (EKRPRTAFTGDQLARLKREFSENKYLTEQRRTCLAKELNLNESQIKIWFQNKRAKMKKAS). Residues 79–98 (NHSSSSSSSSSSSSSIFLLA) are disordered. Over residues 81 to 98 (SSSSSSSSSSSSSIFLLA) the composition is skewed to low complexity.

Belongs to the engrailed homeobox family. In terms of processing, phosphorylated in the Ser-rich domain.

It is found in the nucleus. This protein specifies the body segmentation pattern. This is Homeobox protein Ht-En (HT-EN) from Helobdella triserialis (Leech).